A 543-amino-acid chain; its full sequence is 2,3-bisphosphoglycerate-independent phosphoglycerate mutase (543 aa).

2 residues coordinate Mn(2+): aspartate 24 and serine 74. Serine 74 acts as the Phosphoserine intermediate in catalysis. Residues histidine 135, 165–166 (RD), arginine 197, arginine 203, 268–271 (RPDR), and lysine 341 contribute to the substrate site. The Mn(2+) site is built by aspartate 408, histidine 412, aspartate 449, histidine 450, and histidine 467.

The protein belongs to the BPG-independent phosphoglycerate mutase family. As to quaternary structure, monomer. The cofactor is Mn(2+).

It carries out the reaction (2R)-2-phosphoglycerate = (2R)-3-phosphoglycerate. The protein operates within carbohydrate degradation; glycolysis; pyruvate from D-glyceraldehyde 3-phosphate: step 3/5. Catalyzes the interconversion of 2-phosphoglycerate and 3-phosphoglycerate. The polypeptide is 2,3-bisphosphoglycerate-independent phosphoglycerate mutase (Parasynechococcus marenigrum (strain WH8102)).